A 127-amino-acid polypeptide reads, in one-letter code: MSGRGKGGKAKTGGKAKSRSSRAGLQFPVGRLHRILRKGNYAQRVGAGAPVYLAAVLEYLAAEVLELAGNAARDNKKTRIAPRHLQLAVRNDEELNKLLAGVTIAQGGVLPNIQAVLLPKKTGGDKE.

The segment covering 1–20 (MSGRGKGGKAKTGGKAKSRS) has biased composition (basic residues). A disordered region spans residues 1–23 (MSGRGKGGKAKTGGKAKSRSSRA). Ser2 bears the N-acetylserine mark. The residue at position 2 (Ser2) is a Phosphoserine. N6-acetyllysine; partial is present on residues Lys6, Lys9, and Lys11. Gln106 carries the post-translational modification N5-methylglutamine. Residue Lys121 forms a Glycyl lysine isopeptide (Lys-Gly) (interchain with G-Cter in ubiquitin) linkage.

This sequence belongs to the histone H2A family. The nucleosome is a histone octamer containing two molecules each of H2A, H2B, H3 and H4 assembled in one H3-H4 heterotetramer and two H2A-H2B heterodimers. The octamer wraps approximately 147 bp of DNA. Monoubiquitination of Lys-121 gives a specific tag for epigenetic transcriptional repression. In terms of processing, phosphorylation on Ser-2 is enhanced during mitosis. Phosphorylation on Ser-2 directly represses transcription.

It localises to the nucleus. The protein localises to the chromosome. Its function is as follows. Core component of nucleosome. Nucleosomes wrap and compact DNA into chromatin, limiting DNA accessibility to the cellular machineries which require DNA as a template. Histones thereby play a central role in transcription regulation, DNA repair, DNA replication and chromosomal stability. DNA accessibility is regulated via a complex set of post-translational modifications of histones, also called histone code, and nucleosome remodeling. The chain is Histone H2A (his-3) from Caenorhabditis elegans.